The following is a 50-amino-acid chain: Large ribosomal subunit protein bL33B (50 aa).

Belongs to the bacterial ribosomal protein bL33 family.

In Streptococcus pneumoniae (strain ATCC BAA-255 / R6), this protein is Large ribosomal subunit protein bL33B.